The chain runs to 270 residues: NADPH-dependent 7-cyano-7-deazaguanine reductase (270 aa).

79 to 81 (IES) is a substrate binding site. An NADPH-binding site is contributed by 81–82 (SK). The active-site Thioimide intermediate is Cys177. The active-site Proton donor is the Asp184. 216–217 (HE) is a binding site for substrate. 245-246 (RG) provides a ligand contact to NADPH.

The protein belongs to the GTP cyclohydrolase I family. QueF type 2 subfamily. As to quaternary structure, homodimer.

The protein resides in the cytoplasm. It carries out the reaction 7-aminomethyl-7-carbaguanine + 2 NADP(+) = 7-cyano-7-deazaguanine + 2 NADPH + 3 H(+). The protein operates within tRNA modification; tRNA-queuosine biosynthesis. Its function is as follows. Catalyzes the NADPH-dependent reduction of 7-cyano-7-deazaguanine (preQ0) to 7-aminomethyl-7-deazaguanine (preQ1). The protein is NADPH-dependent 7-cyano-7-deazaguanine reductase of Acinetobacter baumannii (strain ATCC 17978 / DSM 105126 / CIP 53.77 / LMG 1025 / NCDC KC755 / 5377).